A 167-amino-acid chain; its full sequence is Seroin (167 aa).

A signal peptide spans 1 to 17 (MATKILIFLSFVALSSA). A glycan (N-linked (GlcNAc...) asparagine) is linked at Asn-26. Repeat copies occupy residues 38-46 (PPLPQPPPL), 56-64 (PPLPQPPPL), 76-78 (PPI), 79-81 (PPI), and 82-84 (PPI). A disordered region spans residues 145 to 167 (VNETIVGDNPPKFEESRKESSSN). A glycan (N-linked (GlcNAc...) asparagine) is linked at Asn-146. Over residues 155 to 167 (PKFEESRKESSSN) the composition is skewed to basic and acidic residues.

Produced by both the posterior (PSG) and middle (MSG) sections of silk glands.

It localises to the secreted. The polypeptide is Seroin (Galleria mellonella (Greater wax moth)).